Here is a 317-residue protein sequence, read N- to C-terminus: MKI67 FHA domain-interacting nucleolar phosphoprotein (317 aa).

An N-acetylalanine modification is found at Ala-2. Lys-40 is covalently cross-linked (Glycyl lysine isopeptide (Lys-Gly) (interchain with G-Cter in SUMO2)). Positions 47 to 125 constitute an RRM domain; that stretch reads GVVYLGHLPS…RLLSCKFMPR (79 aa). Arg-116 is modified (omega-N-methylarginine). Residues Lys-181 and Lys-194 each participate in a glycyl lysine isopeptide (Lys-Gly) (interchain with G-Cter in SUMO2) cross-link. Citrulline is present on Arg-203. Positions 203–317 are disordered; it reads RDSEGNQVLP…KRPRKRKSKQ (115 aa). The span at 213-233 shows a compositional bias: basic and acidic residues; sequence DQKEGLSGEPRRKEKMMKEDI. Ser-219 carries the post-translational modification Phosphoserine. Over residues 238–248 the composition is skewed to basic residues; the sequence is PKKRKRSRRKK. Phosphoserine is present on Ser-253. Phosphothreonine is present on residues Thr-257 and Thr-261. The segment covering 265-284 has biased composition (basic and acidic residues); sequence LERRKSQVMEVGGDKDDEII. Arg-267 and Arg-268 each carry omega-N-methylated arginine. The residue at position 270 (Ser-270) is a Phosphoserine. Lys-293 is covalently cross-linked (Glycyl lysine isopeptide (Lys-Gly) (interchain with G-Cter in SUMO1); alternate). Lys-293 participates in a covalent cross-link: Glycyl lysine isopeptide (Lys-Gly) (interchain with G-Cter in SUMO2); alternate. Thr-301 carries the post-translational modification Phosphothreonine. The span at 308-317 shows a compositional bias: basic residues; it reads KRPRKRKSKQ.

In terms of assembly, binds to the FHA domain of MKI67; this interaction is enhanced in mitosis. In terms of processing, phosphorylated. Citrullinated by PADI4. As to expression, expressed in brain, heart, hind limb muscles, intestine, liver, skin and spleen.

It is found in the nucleus. It localises to the nucleolus. The protein resides in the chromosome. The chain is MKI67 FHA domain-interacting nucleolar phosphoprotein (Nifk) from Mus musculus (Mouse).